We begin with the raw amino-acid sequence, 282 residues long: 4-diphosphocytidyl-2-C-methyl-D-erythritol kinase (282 aa).

Lysine 11 is an active-site residue. An ATP-binding site is contributed by 93–103 (LVSAGLAGGSA). Aspartate 133 is an active-site residue.

Belongs to the GHMP kinase family. IspE subfamily.

It catalyses the reaction 4-CDP-2-C-methyl-D-erythritol + ATP = 4-CDP-2-C-methyl-D-erythritol 2-phosphate + ADP + H(+). It participates in isoprenoid biosynthesis; isopentenyl diphosphate biosynthesis via DXP pathway; isopentenyl diphosphate from 1-deoxy-D-xylulose 5-phosphate: step 3/6. Catalyzes the phosphorylation of the position 2 hydroxy group of 4-diphosphocytidyl-2C-methyl-D-erythritol. The chain is 4-diphosphocytidyl-2-C-methyl-D-erythritol kinase from Ehrlichia chaffeensis (strain ATCC CRL-10679 / Arkansas).